We begin with the raw amino-acid sequence, 276 residues long: Large ribosomal subunit protein uL2 (276 aa).

Residues 211 to 276 (RNRHRGIRPQ…KLIISRRKGK (66 aa)) are disordered. Positions 230-240 (DHPHGGGEGKK) are enriched in basic and acidic residues.

It belongs to the universal ribosomal protein uL2 family. In terms of assembly, part of the 50S ribosomal subunit. Forms a bridge to the 30S subunit in the 70S ribosome.

Its function is as follows. One of the primary rRNA binding proteins. Required for association of the 30S and 50S subunits to form the 70S ribosome, for tRNA binding and peptide bond formation. It has been suggested to have peptidyltransferase activity; this is somewhat controversial. Makes several contacts with the 16S rRNA in the 70S ribosome. This chain is Large ribosomal subunit protein uL2, found in Campylobacter jejuni subsp. doylei (strain ATCC BAA-1458 / RM4099 / 269.97).